The primary structure comprises 155 residues: Biotin carboxyl carrier protein of acetyl-CoA carboxylase (155 aa).

The region spanning 72 to 155 (AASDELSGHL…EFDEPLIVIE (84 aa)) is the Biotinyl-binding domain. Lys121 carries the N6-biotinyllysine modification.

As to quaternary structure, homodimer.

The protein operates within lipid metabolism; fatty acid biosynthesis. This protein is a component of the acetyl coenzyme A carboxylase complex; first, biotin carboxylase catalyzes the carboxylation of the carrier protein and then the transcarboxylase transfers the carboxyl group to form malonyl-CoA. The protein is Biotin carboxyl carrier protein of acetyl-CoA carboxylase (accB) of Haemophilus influenzae (strain ATCC 51907 / DSM 11121 / KW20 / Rd).